A 319-amino-acid chain; its full sequence is Cytochrome f (319 aa).

A signal peptide spans 1–35 (MQNKDACKSLSSWVSLSISLLVLTVPLIWPYNSTA). The heme site is built by phenylalanine 36, cysteine 56, cysteine 59, and histidine 60. The helical transmembrane segment at 285-305 (IQGLLVFFASVILAQIFLVLK) threads the bilayer.

This sequence belongs to the cytochrome f family. In terms of assembly, the 4 large subunits of the cytochrome b6-f complex are cytochrome b6, subunit IV (17 kDa polypeptide, petD), cytochrome f and the Rieske protein, while the 4 small subunits are PetG, PetL, PetM and PetN. The complex functions as a dimer. It depends on heme as a cofactor.

Its subcellular location is the plastid. It localises to the chloroplast thylakoid membrane. Its function is as follows. Component of the cytochrome b6-f complex, which mediates electron transfer between photosystem II (PSII) and photosystem I (PSI), cyclic electron flow around PSI, and state transitions. The chain is Cytochrome f from Staurastrum punctulatum (Green alga).